Consider the following 454-residue polypeptide: T-box protein VegT (454 aa).

A DNA-binding region (T-box) is located at residues 57 to 230; that stretch reads LWSQFHQEGT…HNPFAKGFRE (174 aa). Residues 229 to 241 are compositionally biased toward basic and acidic residues; sequence REQERSHKRDDVL. Disordered stretches follow at residues 229-274 and 295-358; these read REQE…ATRV and ANQG…VPDS. Over residues 308–325 the composition is skewed to polar residues; it reads GVNQEQQVPTSSLNFYNK.

Forms a repression complex on the promoters of the nodal/nr1 and siamois genes with the maternal factors tcf7l1/tcf3 and pouf5.1/oct-25. Interacts (via C-terminus) with tcf7l1/tcf3 (via N-terminus). Also interacts with the other POU-domain transcription factors pou5f1.2/oct-91 and pou5f1.3/oct-60.

It is found in the nucleus. Functionally, transcription factor required for both mesoderm and endoderm formation in the embryo; signaling determinants and concentration levels may determine which germ layer is formed. Acts together with beta-catenin to activate genes that are responsible for mesoderm induction including wnt-8, eomes t/bra, siamois, mix1 and sox17. Directly binds to promoter DNA. Patterns the mesoderm along the dorsoventral and posterior axis. Activates siamois gene transcription when alone or in combination with beta-catenin, but inhibits siamois transcription in combination with pou5f1.1/oct-25. The chain is T-box protein VegT from Xenopus borealis (Kenyan clawed frog).